A 360-amino-acid chain; its full sequence is MLLLLAEYLQQFHKGFAVFQYLTLRGILGVLTALALSLWLGPWMIRTLQVRQIGQAVRNDGPQSHLSKKGTPTMGGALILTAIAVSTLLWADLSNRYVWVVLAVTLLFGAIGWVDDYRKVIEKNSRGLPSRWKYFWQSVFGLAAAIFLYMTAQSPVETTLILPLLKDVSIPLGIGFVVLTYFVIVGSSNAVNLTDGLDGLAILPTVMVAGALAVFCYLSGNVNFAEYLLIPYVPGAGELIVFCAALVGAGLGFLWFNTYPAQVFMGDVGALALGAALGTIAVIVRQEVVLFIMGGVFVMETLSVIIQVASFKLTGKRVFRMAPIHHHFELKGWPEPRVIVRFWIITVILVLIGLATLKLR.

10 helical membrane-spanning segments follow: residues 25–45 (RGIL…PWMI), 73–93 (TMGG…WADL), 97–117 (YVWV…VDDY), 132–152 (WKYF…YMTA), 168–188 (VSIP…VGSS), 199–219 (GLAI…CYLS), 236–256 (AGEL…FLWF), 263–283 (VFMG…IAVI), 288–308 (VVLF…IIQV), and 338–358 (VIVR…ATLK).

This sequence belongs to the glycosyltransferase 4 family. MraY subfamily. The cofactor is Mg(2+).

The protein localises to the cell inner membrane. It carries out the reaction UDP-N-acetyl-alpha-D-muramoyl-L-alanyl-gamma-D-glutamyl-meso-2,6-diaminopimeloyl-D-alanyl-D-alanine + di-trans,octa-cis-undecaprenyl phosphate = di-trans,octa-cis-undecaprenyl diphospho-N-acetyl-alpha-D-muramoyl-L-alanyl-D-glutamyl-meso-2,6-diaminopimeloyl-D-alanyl-D-alanine + UMP. The protein operates within cell wall biogenesis; peptidoglycan biosynthesis. In terms of biological role, catalyzes the initial step of the lipid cycle reactions in the biosynthesis of the cell wall peptidoglycan: transfers peptidoglycan precursor phospho-MurNAc-pentapeptide from UDP-MurNAc-pentapeptide onto the lipid carrier undecaprenyl phosphate, yielding undecaprenyl-pyrophosphoryl-MurNAc-pentapeptide, known as lipid I. This chain is Phospho-N-acetylmuramoyl-pentapeptide-transferase, found in Ectopseudomonas mendocina (strain ymp) (Pseudomonas mendocina).